We begin with the raw amino-acid sequence, 99 residues long: Defensin-like protein 2 (99 aa).

A signal peptide spans 1 to 30 (MAMAKKSVSSFTLIFILVLVIFEVPEIKAQ). Disulfide bonds link cysteine 34-cysteine 86, cysteine 47-cysteine 71, cysteine 56-cysteine 81, and cysteine 60-cysteine 83. Positions 94–99 (ILRGGI) are excised as a propeptide.

It belongs to the DEFL family. Protease inhibitor I18 (RTI/MTI-2) subfamily.

The protein localises to the secreted. In terms of biological role, inhibits bovine beta-trypsin and alpha-chymotrypsin on a 1:1 molar basis. This chain is Defensin-like protein 2, found in Sinapis alba (White mustard).